The following is a 457-amino-acid chain: MDHLPIFCQLRHRACLLVGGGDVAERKARLLLEAGAALTVNALAFAPQFKAWAKQGMLRLVQGEFNASLLDDCWLAIAATDDDAVNNQVSEAAEARRIFCNVVDAPKQASFIMPSIIDRSPLMVAISSGGTSPVLARLLREKLEALLPQHLGKVAGYAGQLRRRVKQTFTSMSERRRFWEKFFVNDRLAQSLANDDEQAVTRITETLLSEPLDDRGEVVLVGAGPGDPGLLTLKGLQQIQQADIVVYDRLVSDEIMNLVRRDADRVFVGKRAGYHCVPQEEINQILLREAQRGKRVVRLKGGDPFIFGRGGEELETLCDAGIPFSVVPGITAASGCSAYAGLPLTHRDYAQSVRLITGHLKNGGEFDWHNLAAEKQTLVFYMGLNQAAAIQEKLIEHGMDPQMPVALVENGTSVKQRVVAGVLTELGALAQRVESPSLIIVGRVVALRDKLNWFSSK.

The tract at residues 1–204 is precorrin-2 dehydrogenase /sirohydrochlorin ferrochelatase; it reads MDHLPIFCQL…DDEQAVTRIT (204 aa). NAD(+) is bound by residues 22-23 and 43-44; these read DV and LA. Position 128 is a phosphoserine (S128). Residues 216 to 457 form a uroporphyrinogen-III C-methyltransferase region; that stretch reads GEVVLVGAGP…RDKLNWFSSK (242 aa). P225 contributes to the S-adenosyl-L-methionine binding site. The Proton acceptor role is filled by D248. The Proton donor role is filled by K270. S-adenosyl-L-methionine is bound by residues 301 to 303, I306, 331 to 332, M382, and G411; these read GGD and TA.

In the N-terminal section; belongs to the precorrin-2 dehydrogenase / sirohydrochlorin ferrochelatase family. The protein in the C-terminal section; belongs to the precorrin methyltransferase family.

The enzyme catalyses uroporphyrinogen III + 2 S-adenosyl-L-methionine = precorrin-2 + 2 S-adenosyl-L-homocysteine + H(+). The catalysed reaction is precorrin-2 + NAD(+) = sirohydrochlorin + NADH + 2 H(+). It catalyses the reaction siroheme + 2 H(+) = sirohydrochlorin + Fe(2+). It functions in the pathway cofactor biosynthesis; adenosylcobalamin biosynthesis; precorrin-2 from uroporphyrinogen III: step 1/1. The protein operates within cofactor biosynthesis; adenosylcobalamin biosynthesis; sirohydrochlorin from precorrin-2: step 1/1. It participates in porphyrin-containing compound metabolism; siroheme biosynthesis; precorrin-2 from uroporphyrinogen III: step 1/1. Its pathway is porphyrin-containing compound metabolism; siroheme biosynthesis; siroheme from sirohydrochlorin: step 1/1. It functions in the pathway porphyrin-containing compound metabolism; siroheme biosynthesis; sirohydrochlorin from precorrin-2: step 1/1. In terms of biological role, multifunctional enzyme that catalyzes the SAM-dependent methylations of uroporphyrinogen III at position C-2 and C-7 to form precorrin-2 via precorrin-1. Then it catalyzes the NAD-dependent ring dehydrogenation of precorrin-2 to yield sirohydrochlorin. Finally, it catalyzes the ferrochelation of sirohydrochlorin to yield siroheme. The chain is Siroheme synthase 2 from Cronobacter sakazakii (strain ATCC BAA-894) (Enterobacter sakazakii).